A 921-amino-acid polypeptide reads, in one-letter code: Probable glucan 1,3-alpha-glucosidase (921 aa).

The signal sequence occupies residues Met-1–Ser-20. Asp-512 functions as the Nucleophile in the catalytic mechanism. The active site involves Glu-515. Asp-588 serves as the catalytic Proton donor. 2 N-linked (GlcNAc...) asparagine glycosylation sites follow: Asn-689 and Asn-804.

The protein belongs to the glycosyl hydrolase 31 family. Heterodimer of a catalytic alpha subunit (PSL5) and a beta subunit (PSL4). As to expression, expressed in roots, rosette leaves, leaf blades, mature stems, cauline leaves, flower buds, flowers and siliques.

It is found in the endoplasmic reticulum. It carries out the reaction Hydrolysis of terminal (1-&gt;3)-alpha-D-glucosidic links in (1-&gt;3)-alpha-D-glucans.. The protein operates within glycan metabolism; N-glycan metabolism. Its function is as follows. Cleaves sequentially the 2 innermost alpha-1,3-linked glucose residues from the Glc(2)Man(9)GlcNAc(2) oligosaccharide precursor of immature glycoproteins. Essential for stable accumulation of the receptor EFR that determines the specific perception of bacterial elongation factor Tu (EF-Tu), a potent elicitor of the defense response to pathogen-associated molecular patterns (PAMPs). Required for sustained activation of EFR-mediated signaling, but not receptor FLS2-mediated signaling elicited by the bacterial flagellin flg22. In Arabidopsis thaliana (Mouse-ear cress), this protein is Probable glucan 1,3-alpha-glucosidase (PSL5).